The following is a 234-amino-acid chain: Ubiquinone biosynthesis O-methyltransferase (234 aa).

Residues arginine 40, glycine 59, aspartate 80, and methionine 123 each contribute to the S-adenosyl-L-methionine site.

This sequence belongs to the methyltransferase superfamily. UbiG/COQ3 family.

The enzyme catalyses a 3-demethylubiquinol + S-adenosyl-L-methionine = a ubiquinol + S-adenosyl-L-homocysteine + H(+). It catalyses the reaction a 3-(all-trans-polyprenyl)benzene-1,2-diol + S-adenosyl-L-methionine = a 2-methoxy-6-(all-trans-polyprenyl)phenol + S-adenosyl-L-homocysteine + H(+). Its pathway is cofactor biosynthesis; ubiquinone biosynthesis. Its function is as follows. O-methyltransferase that catalyzes the 2 O-methylation steps in the ubiquinone biosynthetic pathway. The sequence is that of Ubiquinone biosynthesis O-methyltransferase from Coxiella burnetii (strain CbuG_Q212) (Coxiella burnetii (strain Q212)).